We begin with the raw amino-acid sequence, 447 residues long: Ribosomal protein uS12 methylthiotransferase RimO (447 aa).

Residues 15 to 125 enclose the MTTase N-terminal domain; sequence PRVGFVSLGC…VMQAIHRHLP (111 aa). Residues Cys24, Cys60, Cys89, Cys156, Cys160, and Cys163 each coordinate [4Fe-4S] cluster. In terms of domain architecture, Radical SAM core spans 142–379; the sequence is LTPKHYAYLK…MQWQEEISKK (238 aa). In terms of domain architecture, TRAM spans 379 to 447; sequence KRLAGKKGRI…GIHDLWAKKI (69 aa).

Belongs to the methylthiotransferase family. RimO subfamily. The cofactor is [4Fe-4S] cluster.

Its subcellular location is the cytoplasm. The enzyme catalyses L-aspartate(89)-[ribosomal protein uS12]-hydrogen + (sulfur carrier)-SH + AH2 + 2 S-adenosyl-L-methionine = 3-methylsulfanyl-L-aspartate(89)-[ribosomal protein uS12]-hydrogen + (sulfur carrier)-H + 5'-deoxyadenosine + L-methionine + A + S-adenosyl-L-homocysteine + 2 H(+). In terms of biological role, catalyzes the methylthiolation of an aspartic acid residue of ribosomal protein uS12. In Nitrosomonas europaea (strain ATCC 19718 / CIP 103999 / KCTC 2705 / NBRC 14298), this protein is Ribosomal protein uS12 methylthiotransferase RimO.